The following is a 428-amino-acid chain: Enolase (428 aa).

(2R)-2-phosphoglycerate is bound at residue Gln163. Glu205 (proton donor) is an active-site residue. Positions 242, 286, and 313 each coordinate Mg(2+). 4 residues coordinate (2R)-2-phosphoglycerate: Lys338, Arg367, Ser368, and Lys389. Catalysis depends on Lys338, which acts as the Proton acceptor.

The protein belongs to the enolase family. The cofactor is Mg(2+).

Its subcellular location is the cytoplasm. It is found in the secreted. The protein resides in the cell surface. It catalyses the reaction (2R)-2-phosphoglycerate = phosphoenolpyruvate + H2O. It functions in the pathway carbohydrate degradation; glycolysis; pyruvate from D-glyceraldehyde 3-phosphate: step 4/5. Its function is as follows. Catalyzes the reversible conversion of 2-phosphoglycerate (2-PG) into phosphoenolpyruvate (PEP). It is essential for the degradation of carbohydrates via glycolysis. The sequence is that of Enolase from Acidovorax ebreus (strain TPSY) (Diaphorobacter sp. (strain TPSY)).